Reading from the N-terminus, the 95-residue chain is Small ribosomal subunit protein bS6 (95 aa).

It belongs to the bacterial ribosomal protein bS6 family.

Its function is as follows. Binds together with bS18 to 16S ribosomal RNA. The polypeptide is Small ribosomal subunit protein bS6 (Geobacillus kaustophilus (strain HTA426)).